A 393-amino-acid polypeptide reads, in one-letter code: 5-amino-6-(D-ribitylamino)uracil--L-tyrosine 4-hydroxyphenyl transferase (393 aa).

One can recognise a Radical SAM core domain in the interval 67–322 (VTYVINRNIN…GQWIVNHQPS (256 aa)). [4Fe-4S] cluster is bound by residues C81, C85, and C88.

This sequence belongs to the radical SAM superfamily. CofH family. Consists of two subunits, CofG and CofH. It depends on [4Fe-4S] cluster as a cofactor.

The catalysed reaction is 5-amino-6-(D-ribitylamino)uracil + L-tyrosine + S-adenosyl-L-methionine = 5-amino-5-(4-hydroxybenzyl)-6-(D-ribitylimino)-5,6-dihydrouracil + 2-iminoacetate + 5'-deoxyadenosine + L-methionine + H(+). The protein operates within cofactor biosynthesis; coenzyme F0 biosynthesis. In terms of biological role, catalyzes the radical-mediated synthesis of 5-amino-5-(4-hydroxybenzyl)-6-(D-ribitylimino)-5,6-dihydrouracil from 5-amino-6-(D-ribitylamino)uracil and L-tyrosine. The polypeptide is 5-amino-6-(D-ribitylamino)uracil--L-tyrosine 4-hydroxyphenyl transferase (Thermosynechococcus vestitus (strain NIES-2133 / IAM M-273 / BP-1)).